Consider the following 202-residue polypeptide: FMN-dependent NADH:quinone oxidoreductase (202 aa).

FMN-binding positions include Ser-9, 15–17 (SVS), 95–98 (MYNF), and 139–142 (SRGG).

Belongs to the azoreductase type 1 family. In terms of assembly, homodimer. The cofactor is FMN.

It carries out the reaction 2 a quinone + NADH + H(+) = 2 a 1,4-benzosemiquinone + NAD(+). The catalysed reaction is N,N-dimethyl-1,4-phenylenediamine + anthranilate + 2 NAD(+) = 2-(4-dimethylaminophenyl)diazenylbenzoate + 2 NADH + 2 H(+). Quinone reductase that provides resistance to thiol-specific stress caused by electrophilic quinones. In terms of biological role, also exhibits azoreductase activity. Catalyzes the reductive cleavage of the azo bond in aromatic azo compounds to the corresponding amines. The polypeptide is FMN-dependent NADH:quinone oxidoreductase (Laribacter hongkongensis (strain HLHK9)).